The sequence spans 345 residues: Diacylglycerol O-acyltransferase 1 (345 aa).

The Cytoplasmic segment spans residues 1–49; that stretch reads MSEETSIPGIIASTPPISKDSRRNVSHWLQALAVFLHSVSLTLTASWYT. Residues 50–70 form a helical membrane-spanning segment; the sequence is VLWAFLPFWPFLIVYLIWLIY. The Lumenal portion of the chain corresponds to 71 to 113; the sequence is DDGFVTGKDRQKRWLRNAPPYRWFCHYFPIRLHKTTELDSEKN. A helical membrane pass occupies residues 114–134; sequence YIFGYHPHGIISLGAFGGFAS. Residues 135-141 lie on the Cytoplasmic side of the membrane; it reads EGADFSK. Residues 142-162 traverse the membrane as a helical segment; sequence LFPGINVSVLTLNSNFYVPVY. Topologically, residues 163–216 are lumenal; that stretch reads RDYLMALNINSVSKKSCVSILSRKPGDSVLIVIGGAQESLLSRPGQNNLVLKKR. The helical transmembrane segment at 217–237 threads the bilayer; it reads FGFVKLAFLTGSSLVPCFAFG. The Cytoplasmic portion of the chain corresponds to 238-345; sequence ESDIFEQVDN…NRISELKLSA (108 aa).

The protein belongs to the diacylglycerol acyltransferase family.

It localises to the lipid droplet. The protein localises to the endoplasmic reticulum membrane. The enzyme catalyses an acyl-CoA + a 1,2-diacyl-sn-glycerol = a triacyl-sn-glycerol + CoA. The catalysed reaction is a 2-acylglycerol + an acyl-CoA = a 1,2-diacyl-sn-glycerol + CoA. The protein operates within glycerolipid metabolism; triacylglycerol biosynthesis. Catalyzes the terminal and only committed step in triacylglycerol (TAG) synthesis by using diacylglycerol (DAG) and fatty acyl-CoA as substrates. Required for storage lipid synthesis. Major DAG esterifying enzyme in stationary phase when TAG production is particularly active. Involved in lipid particle synthesis from the endoplasmic reticulum, promoting localized TAG production at discrete ER subdomains. This is Diacylglycerol O-acyltransferase 1 (dga1) from Schizosaccharomyces pombe (strain 972 / ATCC 24843) (Fission yeast).